Consider the following 225-residue polypeptide: UPF0700 transmembrane protein YoaK (225 aa).

6 helical membrane-spanning segments follow: residues 10 to 30 (LLSLLCLTAGIVDVIGYLSLG), 56 to 76 (VFNSLTALIGFICGVIIATLM), 99 to 119 (ILFVFACLSFYRAFVPVHILI), 137 to 157 (GIAGISSTVLTGTLASLLEDI), 174 to 194 (TVLRALAIILYCVGAIIVALA), and 197 to 217 (DFYHFIIWVPIVLIFGIMMTA).

This sequence belongs to the UPF0700 family.

It localises to the cell membrane. The protein is UPF0700 transmembrane protein YoaK (yoaK) of Bacillus subtilis (strain 168).